The sequence spans 321 residues: Citrate synthase (321 aa).

Active-site residues include histidine 248 and aspartate 306.

This sequence belongs to the citrate synthase family.

The enzyme catalyses oxaloacetate + acetyl-CoA + H2O = citrate + CoA + H(+). It functions in the pathway carbohydrate metabolism; tricarboxylic acid cycle; isocitrate from oxaloacetate: step 1/2. The polypeptide is Citrate synthase (gltA) (Bartonella bacilliformis).